Reading from the N-terminus, the 718-residue chain is MAGGPGPGDPAVPGAQHFLYEVPPWVMCRFYKVMDALEPADWCQFAALIVRDQTELRLCERSGQRTASVLWPWINRNARVADLVRILTHLQLLRARDIITAWHPPAPLLPPSTTSLTPSSISAPSEAAVPGHRKLPSLASTFLSPAFPGSQTHSDPELCPGPSPAAHQPPLPSPAPSSTKPSPESPMSLLPGAPSSSFCWPLHEICQGTHDFSEELKIGEGGFGCVYRAVMRNTVYAVKRLKEEADLEWTTVKQSFQTEVQQLSRFRHPNIVDFAGYCAQSGFYCLVYGFLPNGSLEDRLHVQTQAWPPLSWPQRLDILLGTARAIQFLHQDSPSLIHGDVKSSNVLLDERLMPKLGDFGLARLSRFTGANPGQSSSVARTRTVRGTLAYLPEEYVKTGRLAVDTDTFSFGVVLLETLAGQRAVRMHGAQPKYLKDLVEEEAEEAGVTLKGTQTAVQGGPAADTWAALVAAQIYKKHLDPRPGPCPPQLGLALGQLACCCLHRRAKRRPPMTQVYQTLEELQVVVAGPCLELEAASRSPPSPQENSYVSTSGSALSRASPWQPLAAPLGAQAQATDWPQKGANQPVESDESVSDLSAALHSWHLSPSCPAGPGAPSWVPAPFGQAACTQGGAARESSCGSGPGLQPTAVEGPLLGSSMSSRPPQIVINPARRKMLQKLALYEDGVLDSLQLLSSSSLPDSGQDLQDRQGPEERDEFRS.

Positions 27-106 constitute a Death domain; it reads MCRFYKVMDA…DIITAWHPPA (80 aa). A Phosphothreonine; by PKC/PRKCI modification is found at Thr66. Residues 110 to 211 are proST region; that stretch reads PPSTTSLTPS…LHEICQGTHD (102 aa). Lys134 is covalently cross-linked (Glycyl lysine isopeptide (Lys-Gly) (interchain with G-Cter in ubiquitin)). The disordered stretch occupies residues 146 to 188; it reads AFPGSQTHSDPELCPGPSPAAHQPPLPSPAPSSTKPSPESPMS. Pro residues predominate over residues 159–175; the sequence is CPGPSPAAHQPPLPSPA. The span at 176–188 shows a compositional bias: low complexity; it reads PSSTKPSPESPMS. Lys180 is covalently cross-linked (Glycyl lysine isopeptide (Lys-Gly) (interchain with G-Cter in ubiquitin)). A Phosphothreonine; by IRAK4 modification is found at Thr209. The Protein kinase domain occupies 212–521; that stretch reads FSEELKIGEG…TQVYQTLEEL (310 aa). ATP is bound by residues 218–226 and Lys239; that span reads IGEGGFGCV. The active-site Proton acceptor is the Asp340. ATP contacts are provided by residues 342–345 and Asp358; that span reads KSSN. Ser375 carries the phosphoserine modification. Residue Thr387 is modified to Phosphothreonine. The segment at 534–554 is disordered; the sequence is AASRSPPSPQENSYVSTSGSA. Over residues 543 to 554 the composition is skewed to polar residues; the sequence is QENSYVSTSGSA. Ser556 bears the Phosphoserine mark. 3 disordered regions span residues 569–594, 631–662, and 692–718; these read GAQA…SVSD, GAAR…SSRP, and LSSS…EFRS. Positions 692–703 are enriched in low complexity; it reads LSSSSLPDSGQD. The span at 704–718 shows a compositional bias: basic and acidic residues; it reads LQDRQGPEERDEFRS.

This sequence belongs to the protein kinase superfamily. TKL Ser/Thr protein kinase family. Pelle subfamily. As to quaternary structure, homodimer. Forms a complex with TRAF6, PELI1, IRAK4 and MYD88. Direct binding of SMAD6 to PELI1 prevents complex formation and hence negatively regulates IL1R-TLR signaling and eventually NF-kappa-B-mediated gene expression. The TRAF6-PELI1-IRAK1-IRAK4-MYD88 complex recruits MAP3K7/TAK1, TAB1 and TAB2 to mediate NF-kappa-B activation. Interaction with MYD88 recruits IRAK1 to the stimulated receptor complex. Interacts with TOLLIP; this interaction occurs in the cytosol prior to receptor activation. Interacts with IL1RL1. Interacts (when polyubiquitinated) with IKBKG/NEMO. Interacts with RSAD2/viperin. Interacts with IRAK1BP1. Interacts with PELI2. Interacts with ZC3H12A; this interaction increases the interaction between ZC3H12A and IKBKB/IKKB. Interacts with IRAK4. Interacts with PELI3. Interacts with PELI1 and TRAF6. Interacts with INAVA; the interaction takes place upon PRR stimulation. Interacts (via C-terminus) with NFATC4 (via N-terminus). Mg(2+) serves as cofactor. In terms of processing, following recruitment on the activated receptor complex, phosphorylated on Thr-209, probably by IRAK4, resulting in a conformational change of the kinase domain, allowing further phosphorylations to take place. Thr-387 phosphorylation in the activation loop is required to achieve full enzymatic activity. Polyubiquitinated by TRAF6 after cell stimulation with IL-1-beta by PELI1, PELI2 and PELI3. Polyubiquitination occurs with polyubiquitin chains linked through 'Lys-63'. Ubiquitination promotes interaction with NEMO/IKBKG. Also sumoylated; leading to nuclear translocation.

The protein resides in the cytoplasm. It localises to the nucleus. The protein localises to the lipid droplet. It carries out the reaction L-seryl-[protein] + ATP = O-phospho-L-seryl-[protein] + ADP + H(+). It catalyses the reaction L-threonyl-[protein] + ATP = O-phospho-L-threonyl-[protein] + ADP + H(+). Its function is as follows. Serine/threonine-protein kinase that plays a critical role in initiating innate immune response against foreign pathogens. Involved in Toll-like receptor (TLR) and IL-1R signaling pathways. Is rapidly recruited by MYD88 to the receptor-signaling complex upon TLR activation. Association with MYD88 leads to IRAK1 phosphorylation by IRAK4 and subsequent autophosphorylation and kinase activation. Phosphorylates E3 ubiquitin ligases Pellino proteins (PELI1, PELI2 and PELI3) to promote pellino-mediated polyubiquitination of IRAK1. Then, the ubiquitin-binding domain of IKBKG/NEMO binds to polyubiquitinated IRAK1 bringing together the IRAK1-MAP3K7/TAK1-TRAF6 complex and the NEMO-IKKA-IKKB complex. In turn, MAP3K7/TAK1 activates IKKs (CHUK/IKKA and IKBKB/IKKB) leading to NF-kappa-B nuclear translocation and activation. Alternatively, phosphorylates TIRAP to promote its ubiquitination and subsequent degradation. Phosphorylates the interferon regulatory factor 7 (IRF7) to induce its activation and translocation to the nucleus, resulting in transcriptional activation of type I IFN genes, which drive the cell in an antiviral state. When sumoylated, translocates to the nucleus and phosphorylates STAT3. The sequence is that of Interleukin-1 receptor-associated kinase 1 (IRAK1) from Bos taurus (Bovine).